Consider the following 175-residue polypeptide: Glutamyl-tRNA(Gln) amidotransferase subunit C, mitochondrial (175 aa).

This sequence belongs to the GatC family. As to quaternary structure, subunit of the heterotrimeric GatCAB amidotransferase (AdT) complex, composed of A, B and C subunits.

It is found in the mitochondrion. The enzyme catalyses L-glutamyl-tRNA(Gln) + L-glutamine + ATP + H2O = L-glutaminyl-tRNA(Gln) + L-glutamate + ADP + phosphate + H(+). Functionally, allows the formation of correctly charged Gln-tRNA(Gln) through the transamidation of misacylated Glu-tRNA(Gln) in the mitochondria. The reaction takes place in the presence of glutamine and ATP through an activated gamma-phospho-Glu-tRNA(Gln). In Caenorhabditis elegans, this protein is Glutamyl-tRNA(Gln) amidotransferase subunit C, mitochondrial.